Here is a 543-residue protein sequence, read N- to C-terminus: Sensor histidine kinase DcuS (543 aa).

At 1-20 the chain is on the cytoplasmic side; it reads MRHSLPYHILRKRPMKLSTT. The helical transmembrane segment at 21-41 threads the bilayer; that stretch reads VILMVSAVLFSVLLVVHLIYF. The Periplasmic segment spans residues 42–181; the sequence is SQISDMTRDG…VTQQINDSRW (140 aa). (R)-malate is bound by residues 107–110, Lys121, 140–142, and Arg147; these read RYSH and GFL. A helical membrane pass occupies residues 182-202; sequence SIIWSVLFGMLVGLIGTCILV. Residues 203-543 are Cytoplasmic-facing; it reads KVLKKILFGL…IPWDGERSNR (341 aa). In terms of domain architecture, PAS spans 212 to 323; the sequence is LEPYEISTLF…IIGAISTFRD (112 aa). One can recognise a Histidine kinase domain in the interval 346 to 538; it reads ERSHEFMNKL…QFFVQIPWDG (193 aa). His349 is subject to Phosphohistidine; by autocatalysis.

Homodimer. Autophosphorylated. The phosphoryl group is rapidly transferred to DcuR.

It localises to the cell inner membrane. It catalyses the reaction ATP + protein L-histidine = ADP + protein N-phospho-L-histidine.. Its function is as follows. Member of the two-component regulatory system DcuR/DcuS. Involved in the C4-dicarboxylate-stimulated regulation of the genes encoding the anaerobic fumarate respiratory system (frdABCD; nuoAN; dcuB; sdhCDAB; etc.). Weakly regulates the aerobic C4-dicarboxylate transporter dctA. Activates DcuR by phosphorylation. This chain is Sensor histidine kinase DcuS (dcuS), found in Shigella flexneri.